The primary structure comprises 70 residues: MNIHYPHPYDPKNKAVIIRQWERICRTKCPINSPHDVDKDYIGTFVEYTFIDKKGRKQHVEEYCLKVTWL.

This is an uncharacterized protein from Enterobacteria phage T4 (Bacteriophage T4).